The chain runs to 142 residues: Transcriptional regulator MraZ (142 aa).

SpoVT-AbrB domains are found at residues Glu-5–Ser-47 and Ala-76–Arg-119.

It belongs to the MraZ family. Forms oligomers.

The protein localises to the cytoplasm. The protein resides in the nucleoid. This chain is Transcriptional regulator MraZ, found in Deinococcus geothermalis (strain DSM 11300 / CIP 105573 / AG-3a).